The sequence spans 28 residues: Potassium channel toxin alpha-KTx 9.10 (28 aa).

3 disulfide bridges follow: C3–C19, C6–C24, and C10–C26.

It belongs to the short scorpion toxin superfamily. Potassium channel inhibitor family. Alpha-KTx 09 subfamily. As to expression, expressed by the venom gland.

It is found in the secreted. Functionally, blocks Shaker potassium channels. The polypeptide is Potassium channel toxin alpha-KTx 9.10 (Mesobuthus eupeus (Lesser Asian scorpion)).